The primary structure comprises 337 residues: DNA-directed RNA polymerase subunit alpha (337 aa).

The segment at 1-233 (MVREEVVGST…DLFIPFLHAE (233 aa)) is alpha N-terminal domain (alpha-NTD). The tract at residues 265-337 (KEIALKCIFI…FAIDLPKNKF (73 aa)) is alpha C-terminal domain (alpha-CTD).

The protein belongs to the RNA polymerase alpha chain family. As to quaternary structure, in plastids the minimal PEP RNA polymerase catalytic core is composed of four subunits: alpha, beta, beta', and beta''. When a (nuclear-encoded) sigma factor is associated with the core the holoenzyme is formed, which can initiate transcription.

Its subcellular location is the plastid. It localises to the chloroplast. It carries out the reaction RNA(n) + a ribonucleoside 5'-triphosphate = RNA(n+1) + diphosphate. Functionally, DNA-dependent RNA polymerase catalyzes the transcription of DNA into RNA using the four ribonucleoside triphosphates as substrates. The chain is DNA-directed RNA polymerase subunit alpha from Acorus gramineus (Dwarf sweet flag).